The chain runs to 900 residues: Bifunctional uridylyltransferase/uridylyl-removing enzyme (900 aa).

The uridylyltransferase stretch occupies residues 1–342 (MPQVDPELFD…PCEQPVQIQP (342 aa)). Residues 343–705 (LNSRFQLRDG…TTQREFESGS (363 aa)) are uridylyl-removing. The HD domain maps to 461–583 (VDAHTLNLIK…VGDQTHLDYL (123 aa)). 2 consecutive ACT domains span residues 706-789 (QIFI…IIQR) and 816-891 (VLEV…DNGR).

It belongs to the GlnD family. Mg(2+) serves as cofactor.

It carries out the reaction [protein-PII]-L-tyrosine + UTP = [protein-PII]-uridylyl-L-tyrosine + diphosphate. It catalyses the reaction [protein-PII]-uridylyl-L-tyrosine + H2O = [protein-PII]-L-tyrosine + UMP + H(+). Uridylyltransferase (UTase) activity is inhibited by glutamine, while glutamine activates uridylyl-removing (UR) activity. Its function is as follows. Modifies, by uridylylation and deuridylylation, the PII regulatory proteins (GlnB and homologs), in response to the nitrogen status of the cell that GlnD senses through the glutamine level. Under low glutamine levels, catalyzes the conversion of the PII proteins and UTP to PII-UMP and PPi, while under higher glutamine levels, GlnD hydrolyzes PII-UMP to PII and UMP (deuridylylation). Thus, controls uridylylation state and activity of the PII proteins, and plays an important role in the regulation of nitrogen assimilation and metabolism. This is Bifunctional uridylyltransferase/uridylyl-removing enzyme from Pseudomonas aeruginosa (strain LESB58).